Reading from the N-terminus, the 621-residue chain is Pentatricopeptide repeat-containing protein At1g12620 (621 aa).

PPR repeat units lie at residues 36 to 70 (GKVSYRERLRSGIVDIKEDDAVDLFQEMTRSRPRP), 71 to 105 (RLIDFSRLFSVVARTKQYDLVLDLCKQMELKGIAH), 106 to 140 (NLYTLSIMINCCCRCRKLSLAFSAMGKIIKLGYEP), 141 to 175 (DTVTFSTLINGLCLEGRVSEALELVDRMVEMGHKP), 176 to 210 (TLITLNALVNGLCLNGKVSDAVLLIDRMVETGFQP), 211 to 245 (NEVTYGPVLKVMCKSGQTALAMELLRKMEERKIKL), 246 to 280 (DAVKYSIIIDGLCKDGSLDNAFNLFNEMEIKGFKA), 281 to 315 (DIIIYTTLIRGFCYAGRWDDGAKLLRDMIKRKITP), 316 to 350 (DVVAFSALIDCFVKEGKLREAEELHKEMIQRGISP), 351 to 385 (DTVTYTSLIDGFCKENQLDKANHMLDLMVSKGCGP), 386 to 420 (NIRTFNILINGYCKANLIDDGLELFRKMSLRGVVA), 421 to 455 (DTVTYNTLIQGFCELGKLEVAKELFQEMVSRRVRP), 456 to 490 (DIVSYKILLDGLCDNGEPEKALEIFEKIEKSKMEL), 491 to 525 (DIGIYNIIIHGMCNASKVDDAWDLFCSLPLKGVKP), 526 to 560 (DVKTYNIMIGGLCKKGSLSEADLLFRKMEEDGHSP), and 561 to 595 (NGCTYNILIRAHLGEGDATKSAKLIEEIKRCGFSV).

The protein belongs to the PPR family. P subfamily.

The polypeptide is Pentatricopeptide repeat-containing protein At1g12620 (Arabidopsis thaliana (Mouse-ear cress)).